The primary structure comprises 179 residues: Nicotinamide-nucleotide adenylyltransferase (179 aa).

It belongs to the archaeal NMN adenylyltransferase family.

Its subcellular location is the cytoplasm. It catalyses the reaction beta-nicotinamide D-ribonucleotide + ATP + H(+) = diphosphate + NAD(+). Its pathway is cofactor biosynthesis; NAD(+) biosynthesis; NAD(+) from nicotinamide D-ribonucleotide: step 1/1. The polypeptide is Nicotinamide-nucleotide adenylyltransferase (Thermoplasma acidophilum (strain ATCC 25905 / DSM 1728 / JCM 9062 / NBRC 15155 / AMRC-C165)).